The sequence spans 429 residues: Serine--tRNA ligase (429 aa).

228–230 (TSE) lines the L-serine pocket. 259–261 (RAE) contacts ATP. E282 is a binding site for L-serine. 346 to 349 (EISS) serves as a coordination point for ATP. S384 contributes to the L-serine binding site.

This sequence belongs to the class-II aminoacyl-tRNA synthetase family. Type-1 seryl-tRNA synthetase subfamily. In terms of assembly, homodimer. The tRNA molecule binds across the dimer.

The protein localises to the cytoplasm. It carries out the reaction tRNA(Ser) + L-serine + ATP = L-seryl-tRNA(Ser) + AMP + diphosphate + H(+). The catalysed reaction is tRNA(Sec) + L-serine + ATP = L-seryl-tRNA(Sec) + AMP + diphosphate + H(+). Its pathway is aminoacyl-tRNA biosynthesis; selenocysteinyl-tRNA(Sec) biosynthesis; L-seryl-tRNA(Sec) from L-serine and tRNA(Sec): step 1/1. Its function is as follows. Catalyzes the attachment of serine to tRNA(Ser). Is also able to aminoacylate tRNA(Sec) with serine, to form the misacylated tRNA L-seryl-tRNA(Sec), which will be further converted into selenocysteinyl-tRNA(Sec). This is Serine--tRNA ligase from Anaplasma marginale (strain St. Maries).